The primary structure comprises 593 residues: Aspartate--tRNA ligase (593 aa).

Glu-180 provides a ligand contact to L-aspartate. The tract at residues 204–207 (QIFK) is aspartate. Arg-226 is an L-aspartate binding site. ATP is bound by residues 226–228 (RDE) and Gln-235. Position 453 (His-453) interacts with L-aspartate. Glu-487 is an ATP binding site. Arg-494 is a binding site for L-aspartate. Residue 539–542 (GLDR) coordinates ATP.

Belongs to the class-II aminoacyl-tRNA synthetase family. Type 1 subfamily. In terms of assembly, homodimer.

Its subcellular location is the cytoplasm. The catalysed reaction is tRNA(Asp) + L-aspartate + ATP = L-aspartyl-tRNA(Asp) + AMP + diphosphate. In terms of biological role, catalyzes the attachment of L-aspartate to tRNA(Asp) in a two-step reaction: L-aspartate is first activated by ATP to form Asp-AMP and then transferred to the acceptor end of tRNA(Asp). In Clostridium botulinum (strain 657 / Type Ba4), this protein is Aspartate--tRNA ligase.